A 396-amino-acid chain; its full sequence is Ornithine aminotransferase 2 (396 aa).

N6-(pyridoxal phosphate)lysine is present on Lys-255.

This sequence belongs to the class-III pyridoxal-phosphate-dependent aminotransferase family. OAT subfamily. The cofactor is pyridoxal 5'-phosphate.

The protein resides in the cytoplasm. The catalysed reaction is a 2-oxocarboxylate + L-ornithine = L-glutamate 5-semialdehyde + an L-alpha-amino acid. Its pathway is amino-acid biosynthesis; L-proline biosynthesis; L-glutamate 5-semialdehyde from L-ornithine: step 1/1. Functionally, catalyzes the interconversion of ornithine to glutamate semialdehyde. The sequence is that of Ornithine aminotransferase 2 from Staphylococcus aureus (strain MRSA252).